A 341-amino-acid chain; its full sequence is Ketol-acid reductoisomerase (NADP(+)) (341 aa).

In terms of domain architecture, KARI N-terminal Rossmann spans 2–181; that stretch reads AKVYYNGDAN…GAARAGVLET (180 aa). Residues 25–28, R48, S52, and 82–85 each bind NADP(+); these read YGSQ and DEKQ. The active site involves H107. G133 contributes to the NADP(+) binding site. Positions 182–327 constitute a KARI C-terminal knotted domain; it reads TFKEETETDL…RELRSMMPFV (146 aa). D190, E194, E226, and E230 together coordinate Mg(2+). Substrate is bound at residue S251.

Belongs to the ketol-acid reductoisomerase family. Requires Mg(2+) as cofactor.

It carries out the reaction (2R)-2,3-dihydroxy-3-methylbutanoate + NADP(+) = (2S)-2-acetolactate + NADPH + H(+). The catalysed reaction is (2R,3R)-2,3-dihydroxy-3-methylpentanoate + NADP(+) = (S)-2-ethyl-2-hydroxy-3-oxobutanoate + NADPH + H(+). The protein operates within amino-acid biosynthesis; L-isoleucine biosynthesis; L-isoleucine from 2-oxobutanoate: step 2/4. It functions in the pathway amino-acid biosynthesis; L-valine biosynthesis; L-valine from pyruvate: step 2/4. In terms of biological role, involved in the biosynthesis of branched-chain amino acids (BCAA). Catalyzes an alkyl-migration followed by a ketol-acid reduction of (S)-2-acetolactate (S2AL) to yield (R)-2,3-dihydroxy-isovalerate. In the isomerase reaction, S2AL is rearranged via a Mg-dependent methyl migration to produce 3-hydroxy-3-methyl-2-ketobutyrate (HMKB). In the reductase reaction, this 2-ketoacid undergoes a metal-dependent reduction by NADPH to yield (R)-2,3-dihydroxy-isovalerate. This Geobacillus kaustophilus (strain HTA426) protein is Ketol-acid reductoisomerase (NADP(+)).